A 503-amino-acid chain; its full sequence is AMP phosphorylase (503 aa).

AMP contacts are provided by residues Gly-168, 194 to 199 (SRAITS), and Thr-203. The Proton donor role is filled by Asp-256. AMP is bound by residues Ser-264 and Lys-288.

Belongs to the thymidine/pyrimidine-nucleoside phosphorylase family. Type 2 subfamily.

It catalyses the reaction AMP + phosphate = alpha-D-ribose 1,5-bisphosphate + adenine. The enzyme catalyses CMP + phosphate = cytosine + alpha-D-ribose 1,5-bisphosphate. The catalysed reaction is UMP + phosphate = alpha-D-ribose 1,5-bisphosphate + uracil. Its function is as follows. Catalyzes the conversion of AMP and phosphate to adenine and ribose 1,5-bisphosphate (R15P). Exhibits phosphorylase activity toward CMP and UMP in addition to AMP. Functions in an archaeal AMP degradation pathway, together with R15P isomerase and RubisCO. This Pyrococcus horikoshii (strain ATCC 700860 / DSM 12428 / JCM 9974 / NBRC 100139 / OT-3) protein is AMP phosphorylase.